The chain runs to 208 residues: Uridine kinase (208 aa).

Glycine 11–serine 18 provides a ligand contact to ATP.

It belongs to the uridine kinase family.

The protein resides in the cytoplasm. It carries out the reaction uridine + ATP = UMP + ADP + H(+). The enzyme catalyses cytidine + ATP = CMP + ADP + H(+). It participates in pyrimidine metabolism; CTP biosynthesis via salvage pathway; CTP from cytidine: step 1/3. It functions in the pathway pyrimidine metabolism; UMP biosynthesis via salvage pathway; UMP from uridine: step 1/1. The protein is Uridine kinase of Clostridium novyi (strain NT).